We begin with the raw amino-acid sequence, 393 residues long: NAD(P)H-quinone oxidoreductase subunit H, chloroplastic (393 aa).

This sequence belongs to the complex I 49 kDa subunit family. In terms of assembly, NDH is composed of at least 16 different subunits, 5 of which are encoded in the nucleus.

It is found in the plastid. It localises to the chloroplast thylakoid membrane. It carries out the reaction a plastoquinone + NADH + (n+1) H(+)(in) = a plastoquinol + NAD(+) + n H(+)(out). The catalysed reaction is a plastoquinone + NADPH + (n+1) H(+)(in) = a plastoquinol + NADP(+) + n H(+)(out). Functionally, NDH shuttles electrons from NAD(P)H:plastoquinone, via FMN and iron-sulfur (Fe-S) centers, to quinones in the photosynthetic chain and possibly in a chloroplast respiratory chain. The immediate electron acceptor for the enzyme in this species is believed to be plastoquinone. Couples the redox reaction to proton translocation, and thus conserves the redox energy in a proton gradient. In Nicotiana sylvestris (Wood tobacco), this protein is NAD(P)H-quinone oxidoreductase subunit H, chloroplastic.